The following is a 162-amino-acid chain: Caveolin-2 (162 aa).

The Cytoplasmic portion of the chain corresponds to 1 to 86 (MGLETEKADV…FEISKYVIYK (86 aa)). A Phosphotyrosine; by SRC modification is found at Tyr19. 2 positions are modified to phosphoserine: Ser20 and Ser23. Residue Tyr27 is modified to Phosphotyrosine; by SRC. Ser36 is subject to Phosphoserine. Residues 87 to 107 (FLTFFLAIPMAFAAGILFAIL) constitute an intramembrane region (helical). Residues 108-162 (SCLHIWIIMPFVKTCLMVLPSVQTIWKTITDVVIAPLCTSVGRSFSSISLQLSHD) are Cytoplasmic-facing.

Belongs to the caveolin family. Monomer or homodimer. Interacts with CAV1; the interaction forms a stable heterooligomeric complex that is required for targeting to lipid rafts and for caveolae formation. Tyrosine phosphorylated forms do not form heterooligomers with the Tyr-19-phosphorylated form existing as a monomer or dimer, and the Tyr-27-form as a monomer only. Interacts (tyrosine phosphorylated form) with the SH2 domain-containing proteins, RASA1, NCK1 and SRC. Interacts (tyrosine phosphorylated form) with INSR, the interaction (Tyr-27-phosphorylated form) is increased on insulin stimulation. Interacts (Tyr-19 phosphorylated form) with MAPK1 (phosphorylated form); the interaction, promoted by insulin, leads to nuclear location and MAPK1 activation. Interacts with STAT3; the interaction is increased on insulin-induced tyrosine phosphorylation leading to STAT activation. Post-translationally, phosphorylated on serine and tyrosine residues. CAV1 promotes phosphorylation on Ser-23 which then targets the complex to the plasma membrane, lipid rafts and caveolae. Phosphorylation on Ser-36 appears to modulate mitosis in endothelial cells. Phosphorylation on both Tyr-19 and Tyr-27 is required for insulin-induced 'Ser-727' phosphorylation of STAT3 and its activation. Phosphorylation on Tyr-19 is required for insulin-induced phosphorylation of MAPK1 and DNA binding of STAT3. Tyrosine phosphorylation is induced by both EGF and insulin (By. similarity).

It localises to the nucleus. The protein localises to the cytoplasm. It is found in the golgi apparatus membrane. Its subcellular location is the cell membrane. The protein resides in the membrane. It localises to the caveola. In terms of biological role, may act as a scaffolding protein within caveolar membranes. Interacts directly with G-protein alpha subunits and can functionally regulate their activity. Acts as an accessory protein in conjunction with CAV1 in targeting to lipid rafts and driving caveolae formation. The Ser-36 phosphorylated form has a role in modulating mitosis in endothelial cells. Positive regulator of cellular mitogenesis of the MAPK signaling pathway. Required for the insulin-stimulated nuclear translocation and activation of MAPK1 and STAT3, and the subsequent regulation of cell cycle progression. This chain is Caveolin-2 (CAV2), found in Mustela putorius furo (European domestic ferret).